We begin with the raw amino-acid sequence, 271 residues long: Tryptophan synthase alpha chain (271 aa).

Active-site proton acceptor residues include Glu-49 and Asp-60.

This sequence belongs to the TrpA family. In terms of assembly, tetramer of two alpha and two beta chains.

It catalyses the reaction (1S,2R)-1-C-(indol-3-yl)glycerol 3-phosphate + L-serine = D-glyceraldehyde 3-phosphate + L-tryptophan + H2O. The protein operates within amino-acid biosynthesis; L-tryptophan biosynthesis; L-tryptophan from chorismate: step 5/5. The alpha subunit is responsible for the aldol cleavage of indoleglycerol phosphate to indole and glyceraldehyde 3-phosphate. The protein is Tryptophan synthase alpha chain of Aromatoleum aromaticum (strain DSM 19018 / LMG 30748 / EbN1) (Azoarcus sp. (strain EbN1)).